The chain runs to 326 residues: Phospho-N-acetylmuramoyl-pentapeptide-transferase (326 aa).

A run of 10 helical transmembrane segments spans residues 2 to 22, 51 to 71, 73 to 93, 113 to 133, 143 to 163, 175 to 195, 199 to 219, 225 to 245, 250 to 270, and 305 to 325; these read ILATKVFFTSFVFGFILFPYF, VPPMGGIIILISSLLPILLWA, LTPEILLLILITLFFALLGFI, ILIQFIVALVGVFILKLYSAE, GVIIDFGYLYVPFAAFVIVGS, GLAATQVITSFAFLGLIAYIT, MNITLFCIAFIGAILSFLWFN, IFMGDVGSLSVGAALGLTSVL, MLFAIIGIIFVIETLSVIIQI, and VIVMKFWIISIICSVFTITFL.

The protein belongs to the glycosyltransferase 4 family. MraY subfamily. Requires Mg(2+) as cofactor.

The protein resides in the cell membrane. It carries out the reaction UDP-N-acetyl-alpha-D-muramoyl-L-alanyl-gamma-D-glutamyl-meso-2,6-diaminopimeloyl-D-alanyl-D-alanine + di-trans,octa-cis-undecaprenyl phosphate = di-trans,octa-cis-undecaprenyl diphospho-N-acetyl-alpha-D-muramoyl-L-alanyl-D-glutamyl-meso-2,6-diaminopimeloyl-D-alanyl-D-alanine + UMP. Its pathway is cell wall biogenesis; peptidoglycan biosynthesis. Its function is as follows. Catalyzes the initial step of the lipid cycle reactions in the biosynthesis of the cell wall peptidoglycan: transfers peptidoglycan precursor phospho-MurNAc-pentapeptide from UDP-MurNAc-pentapeptide onto the lipid carrier undecaprenyl phosphate, yielding undecaprenyl-pyrophosphoryl-MurNAc-pentapeptide, known as lipid I. The chain is Phospho-N-acetylmuramoyl-pentapeptide-transferase from Wolbachia pipientis wMel.